We begin with the raw amino-acid sequence, 426 residues long: Formyl-CoA:oxalate CoA-transferase (426 aa).

CoA is bound by residues 17-18 (QS), Arg-38, 72-75 (LDTK), 96-98 (NFG), Arg-104, and 136-139 (KVYE). The Nucleophile role is filled by Asp-168. Position 247–249 (247–249 (GGQ)) interacts with substrate.

The protein belongs to the CoA-transferase III family. Frc subfamily. Homodimer.

The enzyme catalyses formyl-CoA + oxalate = oxalyl-CoA + formate. Its pathway is metabolic intermediate degradation; oxalate degradation; CO(2) and formate from oxalate: step 1/2. Functionally, involved in the catabolism of oxalate and in the adapatation to low pH via the induction of the oxalate-dependent acid tolerance response (ATR). Catalyzes the transfer of the CoA moiety from formyl-CoA to oxalate. The protein is Formyl-CoA:oxalate CoA-transferase of Rhodopseudomonas palustris (strain BisB18).